A 350-amino-acid chain; its full sequence is Induced myeloid leukemia cell differentiation protein Mcl-1 (350 aa).

Glycyl lysine isopeptide (Lys-Gly) (interchain with G-Cter in ubiquitin) cross-links involve residues Lys5 and Lys40. The disordered stretch occupies residues 47–87 (EIGGGEAGAVIGGSAGASPPSTLTPDSRRVARPPPIGAEVP). Residues 50–61 (GGEAGAVIGGSA) show a composition bias toward gly residues. The interval 104 to 175 (RAAPLEEMEA…PAEEEEDELY (72 aa)) is PEST-like. Position 121 is a phosphoserine (Ser121). Lys136 participates in a covalent cross-link: Glycyl lysine isopeptide (Lys-Gly) (interchain with G-Cter in ubiquitin). A disordered region spans residues 148-171 (GESGNNTSTDGSLPSTPPPAEEEE). The segment covering 150–161 (SGNNTSTDGSLP) has biased composition (polar residues). Position 159 is a phosphoserine; by GSK3-alpha and GSK3-beta (Ser159). Position 162 is a phosphoserine (Ser162). At Thr163 the chain carries Phosphothreonine; by MAPK. Residues Lys194 and Lys197 each participate in a glycyl lysine isopeptide (Lys-Gly) (interchain with G-Cter in ubiquitin) cross-link. The BH3 signature appears at 209 to 223 (ALETLRRVGDGVQRN). The BH1 signature appears at 252–272 (HVFSDGVTNWGRIVTLISFGA). Positions 304-319 (DWLVKQRGWDGFVEFF) match the BH2 motif. The helical transmembrane segment at 328-348 (IRNVLLAFAGVAGVGAGLAYL) threads the bilayer.

This sequence belongs to the Bcl-2 family. As to quaternary structure, interacts with HIF3A (via C-terminus domain). Interacts with BAD, BOK, BIK and BMF. Interacts with PMAIP1. Interacts with BBC3. Isoform 1 interacts with BAX, BAK1 and TPT1. Heterodimer of isoform 1 and isoform 2. Homodimers of isoform 1 or isoform 2 are not detected. Isoform 2 does not interact with pro-apoptotic BCL2-related proteins. Interacts with RTL10/BOP. Interacts with BCL2L11; may sequester BCL2L11 to prevent its pro-apoptotic activity. Interacts with GIMAP5 and HSPA8/HSC70; the interaction between HSPA8 and MCL1 is impaired in the absence of GIMAP5. Cleaved by CASP3 during apoptosis. In intact cells cleavage occurs preferentially after Asp-127, yielding a pro-apoptotic 28 kDa C-terminal fragment. Post-translationally, rapidly degraded in the absence of phosphorylation on Thr-163 in the PEST region. In terms of processing, phosphorylated on Ser-159, by GSK3, in response to IL3/interleukin-3 withdrawal. Phosphorylation at Ser-159 induces ubiquitination and proteasomal degradation, abrogating the anti-apoptotic activity. Treatment with taxol or okadaic acid induces phosphorylation on additional sites. Ubiquitinated. Ubiquitination is induced by phosphorylation at Ser-159. Deubiquitinated by USP20; leading to increased stability.

It localises to the membrane. It is found in the cytoplasm. The protein localises to the mitochondrion. The protein resides in the nucleus. Its subcellular location is the nucleoplasm. Its function is as follows. Involved in the regulation of apoptosis versus cell survival, and in the maintenance of viability but not of proliferation. Mediates its effects by interactions with a number of other regulators of apoptosis. Isoform 1 inhibits apoptosis. Isoform 2 promotes apoptosis. The chain is Induced myeloid leukemia cell differentiation protein Mcl-1 (MCL1) from Homo sapiens (Human).